The sequence spans 353 residues: Uroporphyrinogen decarboxylase (353 aa).

Residues 27–31 (RQAGR), F46, D76, Y152, S207, and H321 contribute to the substrate site.

This sequence belongs to the uroporphyrinogen decarboxylase family. As to quaternary structure, homodimer.

The protein resides in the cytoplasm. It catalyses the reaction uroporphyrinogen III + 4 H(+) = coproporphyrinogen III + 4 CO2. It participates in porphyrin-containing compound metabolism; protoporphyrin-IX biosynthesis; coproporphyrinogen-III from 5-aminolevulinate: step 4/4. Its function is as follows. Catalyzes the decarboxylation of four acetate groups of uroporphyrinogen-III to yield coproporphyrinogen-III. The sequence is that of Uroporphyrinogen decarboxylase from Listeria monocytogenes serotype 4b (strain CLIP80459).